A 672-amino-acid polypeptide reads, in one-letter code: Glycine--tRNA ligase beta subunit (672 aa).

Belongs to the class-II aminoacyl-tRNA synthetase family. Tetramer of two alpha and two beta subunits.

It is found in the cytoplasm. The enzyme catalyses tRNA(Gly) + glycine + ATP = glycyl-tRNA(Gly) + AMP + diphosphate. This Thermotoga sp. (strain RQ2) protein is Glycine--tRNA ligase beta subunit.